A 307-amino-acid chain; its full sequence is N-acetylmuramic acid 6-phosphate etherase (307 aa).

The 164-residue stretch at 57–220 folds into the SIS domain; it reads IIEAFKTNGR…TTASMIGVGK (164 aa). The active-site Proton donor is Glu85. The active site involves Glu116.

This sequence belongs to the GCKR-like family. MurNAc-6-P etherase subfamily. Homodimer.

The enzyme catalyses N-acetyl-D-muramate 6-phosphate + H2O = N-acetyl-D-glucosamine 6-phosphate + (R)-lactate. Its pathway is amino-sugar metabolism; N-acetylmuramate degradation. Its function is as follows. Specifically catalyzes the cleavage of the D-lactyl ether substituent of MurNAc 6-phosphate, producing GlcNAc 6-phosphate and D-lactate. The chain is N-acetylmuramic acid 6-phosphate etherase from Alkaliphilus metalliredigens (strain QYMF).